We begin with the raw amino-acid sequence, 332 residues long: Biotin synthase (332 aa).

One can recognise a Radical SAM core domain in the interval 51–279 (YKVQLASLLS…RSRVRLSAGR (229 aa)). [4Fe-4S] cluster-binding residues include Cys-66, Cys-70, and Cys-73. Cys-110, Cys-142, Cys-202, and Arg-274 together coordinate [2Fe-2S] cluster.

The protein belongs to the radical SAM superfamily. Biotin synthase family. Homodimer. The cofactor is [4Fe-4S] cluster. [2Fe-2S] cluster is required as a cofactor.

It carries out the reaction (4R,5S)-dethiobiotin + (sulfur carrier)-SH + 2 reduced [2Fe-2S]-[ferredoxin] + 2 S-adenosyl-L-methionine = (sulfur carrier)-H + biotin + 2 5'-deoxyadenosine + 2 L-methionine + 2 oxidized [2Fe-2S]-[ferredoxin]. It participates in cofactor biosynthesis; biotin biosynthesis; biotin from 7,8-diaminononanoate: step 2/2. Functionally, catalyzes the conversion of dethiobiotin (DTB) to biotin by the insertion of a sulfur atom into dethiobiotin via a radical-based mechanism. This Prochlorococcus marinus (strain SARG / CCMP1375 / SS120) protein is Biotin synthase.